A 624-amino-acid chain; its full sequence is Hemocyanin E chain (624 aa).

6 residues coordinate Cu cation: histidine 169, histidine 173, histidine 200, histidine 320, histidine 324, and histidine 360. Asparagine 445 carries an N-linked (GlcNAc...) asparagine glycan. A disulfide bridge links cysteine 529 with cysteine 577.

Belongs to the tyrosinase family. Hemocyanin subfamily. Tarantula hemocyanin is a 24-chain polymer with seven different chains identified. In terms of tissue distribution, hemolymph.

The protein resides in the secreted. It is found in the extracellular space. Hemocyanins are copper-containing oxygen carriers occurring freely dissolved in the hemolymph of many mollusks and arthropods. The polypeptide is Hemocyanin E chain (HCE) (Aphonopelma sp. (American tarantula)).